A 363-amino-acid polypeptide reads, in one-letter code: Ribonuclease P protein subunit p40 (363 aa).

Component of nuclear RNase P and RNase MRP ribonucleoproteins. RNase P consists of a catalytic RNA moiety and about 10 protein subunits; POP1, POP4, POP5, POP7, RPP14, RPP21, RPP25, RPP30, RPP38 and RPP40. Within the RNase P complex, POP1, POP7 and RPP25 form the 'finger' subcomplex, POP5, RPP14, RPP40 and homodimeric RPP30 form the 'palm' subcomplex, and RPP21, POP4 and RPP38 form the 'wrist' subcomplex. All subunits of the RNase P complex interact with the catalytic RNA. Several subunits of RNase P are also part of the RNase MRP complex. RNase MRP consists of a catalytic RNA moiety and about 8 protein subunits; POP1, POP7, RPP25, RPP30, RPP38, RPP40 and possibly also POP4 and POP5.

It localises to the nucleus. The protein localises to the nucleolus. Its function is as follows. Component of ribonuclease P, a ribonucleoprotein complex that generates mature tRNA molecules by cleaving their 5'-ends. Also a component of the MRP ribonuclease complex, which cleaves pre-rRNA sequences. This Homo sapiens (Human) protein is Ribonuclease P protein subunit p40 (RPP40).